Here is a 327-residue protein sequence, read N- to C-terminus: Peptidyl-prolyl isomerase CWC27 (327 aa).

The PPIase cyclophilin-type domain maps to 8–158 (TTAKVALITT…YPAEITDIKI (151 aa)). Positions 223–307 (ANKKKGPSEN…IDSDYDSDLD (85 aa)) are disordered. 2 stretches are compositionally biased toward basic and acidic residues: residues 228 to 269 (GPSE…ENET) and 277 to 296 (MNHE…DRNP).

It belongs to the cyclophilin-type PPIase family. CWC27 subfamily. Associated with the spliceosome.

The protein resides in the cytoplasm. The protein localises to the nucleus. It catalyses the reaction [protein]-peptidylproline (omega=180) = [protein]-peptidylproline (omega=0). Functionally, PPIases accelerate the folding of proteins. It catalyzes the cis-trans isomerization of proline imidic peptide bonds in oligopeptides. Involved in pre-mRNA splicing. In Debaryomyces hansenii (strain ATCC 36239 / CBS 767 / BCRC 21394 / JCM 1990 / NBRC 0083 / IGC 2968) (Yeast), this protein is Peptidyl-prolyl isomerase CWC27 (CWC27).